A 284-amino-acid chain; its full sequence is Formamidopyrimidine-DNA glycosylase (284 aa).

The active-site Schiff-base intermediate with DNA is P2. Catalysis depends on E3, which acts as the Proton donor. K60 functions as the Proton donor; for beta-elimination activity in the catalytic mechanism. The DNA site is built by H99, R118, and R163. The FPG-type zinc finger occupies 248–282 (WVYGRQGQPCRTCGQTIERIKLVGRSTHFCPQCQP). R272 serves as the catalytic Proton donor; for delta-elimination activity.

The protein belongs to the FPG family. Monomer. It depends on Zn(2+) as a cofactor.

The catalysed reaction is Hydrolysis of DNA containing ring-opened 7-methylguanine residues, releasing 2,6-diamino-4-hydroxy-5-(N-methyl)formamidopyrimidine.. It catalyses the reaction 2'-deoxyribonucleotide-(2'-deoxyribose 5'-phosphate)-2'-deoxyribonucleotide-DNA = a 3'-end 2'-deoxyribonucleotide-(2,3-dehydro-2,3-deoxyribose 5'-phosphate)-DNA + a 5'-end 5'-phospho-2'-deoxyribonucleoside-DNA + H(+). In terms of biological role, involved in base excision repair of DNA damaged by oxidation or by mutagenic agents. Acts as a DNA glycosylase that recognizes and removes damaged bases. Has a preference for oxidized purines, such as 7,8-dihydro-8-oxoguanine (8-oxoG). Has AP (apurinic/apyrimidinic) lyase activity and introduces nicks in the DNA strand. Cleaves the DNA backbone by beta-delta elimination to generate a single-strand break at the site of the removed base with both 3'- and 5'-phosphates. The protein is Formamidopyrimidine-DNA glycosylase of Acaryochloris marina (strain MBIC 11017).